The following is a 404-amino-acid chain: Acetylornithine/succinyldiaminopimelate aminotransferase (404 aa).

Pyridoxal 5'-phosphate contacts are provided by residues 108 to 109 (GA) and F141. R144 is a binding site for N(2)-acetyl-L-ornithine. 226 to 229 (DEIQ) is a binding site for pyridoxal 5'-phosphate. K255 is modified (N6-(pyridoxal phosphate)lysine). N(2)-acetyl-L-ornithine is bound at residue T283. T284 serves as a coordination point for pyridoxal 5'-phosphate.

Belongs to the class-III pyridoxal-phosphate-dependent aminotransferase family. ArgD subfamily. Homodimer. Requires pyridoxal 5'-phosphate as cofactor.

It is found in the cytoplasm. It carries out the reaction N(2)-acetyl-L-ornithine + 2-oxoglutarate = N-acetyl-L-glutamate 5-semialdehyde + L-glutamate. The catalysed reaction is N-succinyl-(2S,6S)-2,6-diaminopimelate + 2-oxoglutarate = (S)-2-succinylamino-6-oxoheptanedioate + L-glutamate. Its pathway is amino-acid biosynthesis; L-arginine biosynthesis; N(2)-acetyl-L-ornithine from L-glutamate: step 4/4. It functions in the pathway amino-acid biosynthesis; L-lysine biosynthesis via DAP pathway; LL-2,6-diaminopimelate from (S)-tetrahydrodipicolinate (succinylase route): step 2/3. Functionally, involved in both the arginine and lysine biosynthetic pathways. In Buchnera aphidicola subsp. Schizaphis graminum (strain Sg), this protein is Acetylornithine/succinyldiaminopimelate aminotransferase.